The primary structure comprises 184 residues: LPS-assembly lipoprotein LptE (184 aa).

The first 19 residues, 1–19, serve as a signal peptide directing secretion; that stretch reads MRHRLFTLVLGLAVLITAG. Cysteine 20 carries the N-palmitoyl cysteine lipid modification. Cysteine 20 carries the S-diacylglycerol cysteine lipid modification.

It belongs to the LptE lipoprotein family. Component of the lipopolysaccharide transport and assembly complex. Interacts with LptD.

It is found in the cell outer membrane. Its function is as follows. Together with LptD, is involved in the assembly of lipopolysaccharide (LPS) at the surface of the outer membrane. Required for the proper assembly of LptD. Binds LPS and may serve as the LPS recognition site at the outer membrane. The chain is LPS-assembly lipoprotein LptE from Pectobacterium atrosepticum (strain SCRI 1043 / ATCC BAA-672) (Erwinia carotovora subsp. atroseptica).